The following is a 463-amino-acid chain: Mitochondrial dynamics protein MID51 (463 aa).

Topologically, residues Met1 to Val23 are mitochondrial intermembrane. The helical transmembrane segment at Leu24 to Val46 threads the bilayer. The Cytoplasmic portion of the chain corresponds to Lys47–Thr463. The interval Met49–Gln195 is dimerization. Phosphoserine occurs at positions 55, 59, 79, and 94. The interval Pro57–Met77 is disordered. The interval Ala160–Arg169 is important for interaction with DNM1L. ADP contacts are provided by Ser187, Ser189, and His201. Residues Arg234–Arg243 are important for interaction with DNM1L. ADP contacts are provided by Ser340, Arg342, and Lys368.

It belongs to the MID49/MID51 family. Homodimer. Interacts with DNM1L.

It is found in the mitochondrion outer membrane. In terms of biological role, mitochondrial outer membrane protein which regulates mitochondrial fission/fusion dynamics. Promotes the recruitment and association of the fission mediator dynamin-related protein 1 (DNM1L) to the mitochondrial surface independently of the mitochondrial fission FIS1 and MFF proteins. Regulates DNM1L GTPase activity and DNM1L oligomerization. Binds ADP and can also bind GDP, although with lower affinity. Does not bind CDP, UDP, ATP, AMP or GTP. Inhibits DNM1L GTPase activity in the absence of bound ADP. Requires ADP to stimulate DNM1L GTPase activity and the assembly of DNM1L into long, oligomeric tubules with a spiral pattern, as opposed to the ring-like DNM1L oligomers observed in the absence of bound ADP. Does not require ADP for its function in recruiting DNM1L. This is Mitochondrial dynamics protein MID51 (Mief1) from Rattus norvegicus (Rat).